Consider the following 211-residue polypeptide: Probable molybdenum cofactor guanylyltransferase (211 aa).

Residues Leu-21 to Gly-23, Lys-33, Asp-84, and Asp-116 contribute to the GTP site. Asp-116 provides a ligand contact to Mg(2+).

It belongs to the MobA family. Mg(2+) is required as a cofactor.

It is found in the cytoplasm. It carries out the reaction Mo-molybdopterin + GTP + H(+) = Mo-molybdopterin guanine dinucleotide + diphosphate. Transfers a GMP moiety from GTP to Mo-molybdopterin (Mo-MPT) cofactor (Moco or molybdenum cofactor) to form Mo-molybdopterin guanine dinucleotide (Mo-MGD) cofactor. The polypeptide is Probable molybdenum cofactor guanylyltransferase (Rhodopirellula baltica (strain DSM 10527 / NCIMB 13988 / SH1)).